We begin with the raw amino-acid sequence, 91 residues long: Pyruvate kinase (91 aa).

Arginine 48 contributes to the substrate binding site. K(+) contacts are provided by asparagine 50, serine 52, aspartate 82, and threonine 83. 50–53 (NFSH) provides a ligand contact to ATP. Arginine 89 serves as a coordination point for ATP.

Belongs to the pyruvate kinase family. In terms of assembly, homotetramer. Requires Mg(2+) as cofactor. K(+) is required as a cofactor.

The catalysed reaction is pyruvate + ATP = phosphoenolpyruvate + ADP + H(+). Its pathway is carbohydrate degradation; glycolysis; pyruvate from D-glyceraldehyde 3-phosphate: step 5/5. The chain is Pyruvate kinase from Leishmania braziliensis.